The following is a 178-amino-acid chain: Aspartate carbamoyltransferase regulatory chain (178 aa).

The span at 1-15 (MNDREPNQKESKESV) shows a compositional bias: basic and acidic residues. Residues 1–23 (MNDREPNQKESKESVNDAVPRAR) are disordered. C133, C138, C159, and C162 together coordinate Zn(2+).

This sequence belongs to the PyrI family. In terms of assembly, contains catalytic and regulatory chains. The cofactor is Zn(2+).

Its function is as follows. Involved in allosteric regulation of aspartate carbamoyltransferase. The sequence is that of Aspartate carbamoyltransferase regulatory chain from Haloquadratum walsbyi (strain DSM 16790 / HBSQ001).